The following is a 177-amino-acid chain: Small ribosomal subunit protein uS5 (177 aa).

Residues 21 to 84 (LKEKMVSVNR…DEARQRMVRV (64 aa)) enclose the S5 DRBM domain.

It belongs to the universal ribosomal protein uS5 family. Part of the 30S ribosomal subunit. Contacts proteins S4 and S8.

With S4 and S12 plays an important role in translational accuracy. Its function is as follows. Located at the back of the 30S subunit body where it stabilizes the conformation of the head with respect to the body. This Nitrosomonas europaea (strain ATCC 19718 / CIP 103999 / KCTC 2705 / NBRC 14298) protein is Small ribosomal subunit protein uS5.